The chain runs to 284 residues: Neutral protease 2 homolog AFLA_119780 (284 aa).

Disulfide bonds link Cys113–Cys185 and Cys192–Cys210. Position 235 (His235) interacts with Zn(2+). The active site involves Glu236. Residues His239 and Asp250 each coordinate Zn(2+).

This sequence belongs to the peptidase M35 family. Requires Zn(2+) as cofactor.

The protein resides in the secreted. The enzyme catalyses Preferential cleavage of bonds with hydrophobic residues in P1'. Also 3-Asn-|-Gln-4 and 8-Gly-|-Ser-9 bonds in insulin B chain.. In terms of biological role, secreted metalloproteinase that allows assimilation of proteinaceous substrates. Shows high activities on basic nuclear substrates such as histone and protamine. The chain is Neutral protease 2 homolog AFLA_119780 from Aspergillus flavus (strain ATCC 200026 / FGSC A1120 / IAM 13836 / NRRL 3357 / JCM 12722 / SRRC 167).